The primary structure comprises 605 residues: Capsid scaffolding protein (605 aa).

Residues H48, S116, and H139 each act as charge relay system in the active site. Positions 235-274 (ASDAPDLQKPDKALQSPPPASTDPATMLSGNAGEGATACG) are disordered. Positions 281–300 (QDLISVPRNTFMTLLQTNLD) are interaction with pAP. Disordered regions lie at residues 403 to 432 (DYVP…PGED) and 489 to 588 (PHQS…KSVS). The Nuclear localization signal motif lies at 410–416 (RSNKRKR). Polar residues predominate over residues 568 to 579 (ASASGVAQSKEP). An interaction with major capsid protein region spans residues 585–605 (KSVSAHLKSIFCEELLNKRVA).

It belongs to the herpesviridae capsid scaffolding protein family. As to quaternary structure, homomultimer. Interacts with major capsid protein. In terms of assembly, exists in a monomer-dimer equilibrium with the dimer being the active species. Post-translationally, capsid scaffolding protein is cleaved by assemblin after formation of the spherical procapsid. As a result, the capsid obtains its mature, icosahedral shape. Cleavages occur at two or more sites: release (R-site) and maturation (M-site).

The protein localises to the host cytoplasm. It is found in the host nucleus. The catalysed reaction is Cleaves -Ala-|-Ser- and -Ala-|-Ala- bonds in the scaffold protein.. Its function is as follows. Acts as a scaffold protein by binding major capsid protein in the cytoplasm, inducing the nuclear localization of both proteins. Multimerizes in the nucleus such as major capsid protein forms the icosahedral T=16 capsid. Autocatalytic cleavage releases the assembly protein, and subsequently abolishes interaction with major capsid protein. Cleavages products are evicted from the capsid before or during DNA packaging. In terms of biological role, protease that plays an essential role in virion assembly within the nucleus. Catalyzes the cleavage of the assembly protein after formation of the spherical procapsid. By that cleavage, the capsid matures and gains its icosahedral shape. The cleavage sites seem to include -Ala-Ser-, -Ala-Ala-, as well as Ala-Thr bonds. Assemblin and cleavages products are evicted from the capsid before or during DNA packaging. Plays a major role in capsid assembly. Acts as a scaffold protein by binding major capsid protein. Multimerizes in the nucleus such as major capsid protein forms the icosahedral T=16 capsid. Cleaved by assemblin after capsid completion. The cleavages products are evicted from the capsid before or during DNA packaging. The protein is Capsid scaffolding protein of Homo sapiens (Human).